We begin with the raw amino-acid sequence, 878 residues long: Phosphoenolpyruvate carboxylase (878 aa).

Active-site residues include His137 and Lys545.

This sequence belongs to the PEPCase type 1 family. Mg(2+) serves as cofactor.

It catalyses the reaction oxaloacetate + phosphate = phosphoenolpyruvate + hydrogencarbonate. Its function is as follows. Forms oxaloacetate, a four-carbon dicarboxylic acid source for the tricarboxylic acid cycle. The polypeptide is Phosphoenolpyruvate carboxylase (Photorhabdus laumondii subsp. laumondii (strain DSM 15139 / CIP 105565 / TT01) (Photorhabdus luminescens subsp. laumondii)).